The chain runs to 323 residues: tRNA U34 carboxymethyltransferase (323 aa).

Carboxy-S-adenosyl-L-methionine is bound by residues Lys91, Trp105, Lys110, Gly130, 180–181 (VE), Met196, Tyr200, and Arg315.

The protein belongs to the class I-like SAM-binding methyltransferase superfamily. CmoB family. In terms of assembly, homotetramer.

It catalyses the reaction carboxy-S-adenosyl-L-methionine + 5-hydroxyuridine(34) in tRNA = 5-carboxymethoxyuridine(34) in tRNA + S-adenosyl-L-homocysteine + H(+). Functionally, catalyzes carboxymethyl transfer from carboxy-S-adenosyl-L-methionine (Cx-SAM) to 5-hydroxyuridine (ho5U) to form 5-carboxymethoxyuridine (cmo5U) at position 34 in tRNAs. This chain is tRNA U34 carboxymethyltransferase, found in Trichlorobacter lovleyi (strain ATCC BAA-1151 / DSM 17278 / SZ) (Geobacter lovleyi).